The sequence spans 378 residues: Glutamate 5-kinase (378 aa).

Position 14 (Lys-14) interacts with ATP. Substrate-binding residues include Ser-54, Asp-141, and Asn-153. Ser-173–Asp-174 contributes to the ATP binding site. Positions Ala-279–Asp-356 constitute a PUA domain.

Belongs to the glutamate 5-kinase family.

The protein localises to the cytoplasm. It carries out the reaction L-glutamate + ATP = L-glutamyl 5-phosphate + ADP. It participates in amino-acid biosynthesis; L-proline biosynthesis; L-glutamate 5-semialdehyde from L-glutamate: step 1/2. Its function is as follows. Catalyzes the transfer of a phosphate group to glutamate to form L-glutamate 5-phosphate. This chain is Glutamate 5-kinase, found in Brucella anthropi (strain ATCC 49188 / DSM 6882 / CCUG 24695 / JCM 21032 / LMG 3331 / NBRC 15819 / NCTC 12168 / Alc 37) (Ochrobactrum anthropi).